The following is a 1674-amino-acid chain: Maestro heat-like repeat-containing protein family member 2A (1674 aa).

Residues 1–26 are disordered; that stretch reads MTEAITEAAVASSEEVSEERDDLGPL. HEAT repeat units follow at residues 73 to 96, 97 to 133, 195 to 234, 254 to 292, 382 to 419, 424 to 461, 573 to 612, 615 to 641, 642 to 679, 739 to 776, 993 to 1030, 1221 to 1263, 1381 to 1420, and 1627 to 1674; these read ATTE…ISTQ, RKVN…EMRE, MPYM…TVQF, LKVF…LLLP, SYPK…ADEP, RAIY…CGYQ, PAPQ…SIAP, ADMW…DQKA, WEDK…SFDS, KTVL…ETVK, GQFG…LHAS, DPLM…SHRP, EKLL…GAPK, and LDFP…QGMS.

This chain is Maestro heat-like repeat-containing protein family member 2A (MROH2A), found in Homo sapiens (Human).